The chain runs to 346 residues: 3 beta-hydroxysteroid dehydrogenase/Delta 5--&gt;4-isomerase (346 aa).

Residue Tyr147 is the Proton acceptor of the active site. Lys151 lines the NAD(+) pocket.

Belongs to the 3-beta-HSD family.

It catalyses the reaction a 3beta-hydroxy-Delta(5)-steroid + NAD(+) = a 3-oxo-Delta(5)-steroid + NADH + H(+). It carries out the reaction a 3-oxo-Delta(5)-steroid = a 3-oxo-Delta(4)-steroid. It functions in the pathway lipid metabolism; steroid biosynthesis. In terms of biological role, catalyzes the oxidative conversion of Delta(5)-ene-3-beta-hydroxy steroid, and the oxidative conversion of ketosteroids. The 3-beta-HSD enzymatic system plays a crucial role in the biosynthesis of all classes of hormonal steroids. During viral infection, steroid production contributes to virulence by inhibiting the host inflammatory response. In Homo sapiens (Human), this protein is 3 beta-hydroxysteroid dehydrogenase/Delta 5--&gt;4-isomerase (OPG174).